The sequence spans 354 residues: Guanine nucleotide-binding protein G(i) subunit alpha-1 (354 aa).

Glycine 2 carries the N-myristoyl glycine lipid modification. Residue cysteine 3 is the site of S-palmitoyl cysteine attachment. In terms of domain architecture, G-alpha spans 32–354 (REVKLLLLGA…KNNLKDCGLF (323 aa)). The G1 motif stretch occupies residues 35–48 (KLLLLGAGESGKST). GTP-binding positions include 43–48 (ESGKST), 150–151 (DS), and 175–178 (LRTR). Serine 47 contributes to the Mg(2+) binding site. The segment at 173 to 181 (DVLRTRVKT) is G2 motif. Threonine 181 contacts Mg(2+). The segment at 196–205 (FKMFDVGGQR) is G3 motif. Residues 200-204 (DVGGQ), 269-272 (NKKD), and alanine 326 contribute to the GTP site. The tract at residues 265 to 272 (ILFLNKKD) is G4 motif. The interval 324 to 329 (TCATDT) is G5 motif.

This sequence belongs to the G-alpha family. G(i/o/t/z) subfamily. In terms of assembly, heterotrimeric G proteins are composed of 3 units; alpha, beta and gamma. The alpha chain contains the guanine nucleotide binding site. Part of a spindle orientation complex at least composed of GNAI1, GPSM2 and NUMA1. Identified in complex with the beta subunit GNB1 and the gamma subunit GNG1. Identified in complex with the beta subunit GNB1 and the gamma subunit GNG2. Component of the TAS2R14-GNAI1 complex, consisting of TAS2R14, GNAI1, GNB1 and GNG2; within the complex interacts with TAS2R14; this complex plays a role in the perception of bitterness. GTP binding causes dissociation of the heterotrimer, liberating the individual subunits so that they can interact with downstream effector proteins. Interacts (GDP-bound form) with GPSM1; this inhibits guanine nucleotide exchange and GTP binding. Interacts (GDP-bound form) with GPSM2 (via GoLoco domains); this inhibits guanine nucleotide exchange. Interacts with RGS10; this strongly enhances GTP hydrolysis. Interacts with RGS1 and RGS16; this strongly enhances GTPase activity. Interacts with RGS4. Interacts with RGS12. Interacts (via active GTP- or inactive GDP-bound forms) with RGS14 (via RGS and GoLoco domains). Interacts with RGS3, RGS6, RGS7, RGS8, RGS17, RGS18 and RGS20 (in vitro). Interacts (GDP-bound form) with RIC8A (via C-terminus); promoting GNAI1 folding and association with the plasma membrane. Interacts (inactive GDP-bound form) with NUCB1 (via GBA motif); the interaction leads to activation of GNAI1. Interacts (inactive GDP-bound form) with CCDC88C/DAPLE (via GBA motif); the interaction leads to activation of GNAI1. Interacts (inactive GDP-bound form) with CCDC8A/GIV (via GBA motif). Interacts with GPR15. Myristoylation at Gly-2 is required for membrane anchoring before palmitoylation. Post-translationally, palmitoylation at Cys-3 varies with membrane lipid composition.

The protein resides in the nucleus. It localises to the cytoplasm. Its subcellular location is the cell membrane. The protein localises to the cytoskeleton. It is found in the microtubule organizing center. The protein resides in the centrosome. It localises to the cell cortex. Its subcellular location is the membrane. Its function is as follows. Guanine nucleotide-binding proteins (G proteins) function as transducers downstream of G protein-coupled receptors (GPCRs) in numerous signaling cascades. The alpha chain contains the guanine nucleotide binding site and alternates between an active, GTP-bound state and an inactive, GDP-bound state. Signaling by an activated GPCR promotes GDP release and GTP binding. The alpha subunit has a low GTPase activity that converts bound GTP to GDP, thereby terminating the signal. Both GDP release and GTP hydrolysis are modulated by numerous regulatory proteins. Signaling is mediated via effector proteins, such as adenylate cyclase. Inhibits adenylate cyclase activity of ADCY1, ADCY5 and ADCY6, leading to decreased intracellular cAMP levels. The inactive GDP-bound form prevents the association of RGS14 with centrosomes and is required for the translocation of RGS14 from the cytoplasm to the plasma membrane. Required for normal cytokinesis during mitosis. Required for cortical dynein-dynactin complex recruitment during metaphase. The sequence is that of Guanine nucleotide-binding protein G(i) subunit alpha-1 (GNAI1) from Pongo abelii (Sumatran orangutan).